The sequence spans 364 residues: FMNH(2)-dependent dimethylsulfone monooxygenase (364 aa).

The protein belongs to the SsuD family.

The catalysed reaction is dimethyl sulfone + FMNH2 + O2 = methanesulfinate + FMN + formaldehyde + H2O + 2 H(+). Its function is as follows. Involved in the dimethyl sulfide degradation pathway. Catalyzes the oxidation of dimethylsulfone (DMSO2) to yield methanesulfinate, which is oxidized spontaneously to methanesulfonate in the presence of dioxygen and FMNH(2). The protein is FMNH(2)-dependent dimethylsulfone monooxygenase of Pseudomonas fluorescens (strain Pf0-1).